A 297-amino-acid chain; its full sequence is 1D-myo-inositol 2-acetamido-2-deoxy-alpha-D-glucopyranoside deacetylase (297 aa).

Residues histidine 14, aspartate 17, and histidine 149 each contribute to the Zn(2+) site.

The protein belongs to the MshB deacetylase family. Zn(2+) is required as a cofactor.

It catalyses the reaction 1D-myo-inositol 2-acetamido-2-deoxy-alpha-D-glucopyranoside + H2O = 1D-myo-inositol 2-amino-2-deoxy-alpha-D-glucopyranoside + acetate. In terms of biological role, catalyzes the deacetylation of 1D-myo-inositol 2-acetamido-2-deoxy-alpha-D-glucopyranoside (GlcNAc-Ins) in the mycothiol biosynthesis pathway. This chain is 1D-myo-inositol 2-acetamido-2-deoxy-alpha-D-glucopyranoside deacetylase, found in Thermomonospora curvata (strain ATCC 19995 / DSM 43183 / JCM 3096 / KCTC 9072 / NBRC 15933 / NCIMB 10081 / Henssen B9).